A 263-amino-acid polypeptide reads, in one-letter code: Sulfur carrier protein FdhD (263 aa).

Cys-107 (cysteine persulfide intermediate) is an active-site residue.

It belongs to the FdhD family.

It is found in the cytoplasm. In terms of biological role, required for formate dehydrogenase (FDH) activity. Acts as a sulfur carrier protein that transfers sulfur from IscS to the molybdenum cofactor prior to its insertion into FDH. This is Sulfur carrier protein FdhD from Bacillus licheniformis (strain ATCC 14580 / DSM 13 / JCM 2505 / CCUG 7422 / NBRC 12200 / NCIMB 9375 / NCTC 10341 / NRRL NRS-1264 / Gibson 46).